A 368-amino-acid polypeptide reads, in one-letter code: 2-aminoethylphosphonate--pyruvate transaminase (368 aa).

An N6-(pyridoxal phosphate)lysine modification is found at Lys192.

The protein belongs to the class-V pyridoxal-phosphate-dependent aminotransferase family. PhnW subfamily. Homodimer. Requires pyridoxal 5'-phosphate as cofactor.

It carries out the reaction (2-aminoethyl)phosphonate + pyruvate = phosphonoacetaldehyde + L-alanine. Its function is as follows. Involved in phosphonate degradation. The chain is 2-aminoethylphosphonate--pyruvate transaminase from Pseudomonas putida (strain W619).